Reading from the N-terminus, the 277-residue chain is Phosphate import ATP-binding protein PstB (277 aa).

Positions Leu31–Ile272 constitute an ABC transporter domain. Gly63 to Ser70 provides a ligand contact to ATP.

This sequence belongs to the ABC transporter superfamily. Phosphate importer (TC 3.A.1.7) family. The complex is composed of two ATP-binding proteins (PstB), two transmembrane proteins (PstC and PstA) (Potential). PstS is missing in this species.

Its subcellular location is the cell inner membrane. The enzyme catalyses phosphate(out) + ATP + H2O = ADP + 2 phosphate(in) + H(+). In terms of biological role, part of the ABC transporter complex PstSACB involved in phosphate import. Responsible for energy coupling to the transport system. In Pseudomonas aeruginosa (strain ATCC 15692 / DSM 22644 / CIP 104116 / JCM 14847 / LMG 12228 / 1C / PRS 101 / PAO1), this protein is Phosphate import ATP-binding protein PstB.